We begin with the raw amino-acid sequence, 457 residues long: tRNA modification GTPase MnmE (457 aa).

Residues Arg24, Glu81, and Lys124 each contribute to the (6S)-5-formyl-5,6,7,8-tetrahydrofolate site. The TrmE-type G domain maps to 220-379; the sequence is GIQLVLAGAP…LKQKILHVVG (160 aa). A K(+)-binding site is contributed by Asn230. GTP-binding positions include 230–235, 249–255, and 274–277; these read NVGKSS, TPIAGTT, and DTAG. Ser234 lines the Mg(2+) pocket. The K(+) site is built by Thr249, Ile251, and Thr254. Residue Thr255 coordinates Mg(2+). Position 457 (Lys457) interacts with (6S)-5-formyl-5,6,7,8-tetrahydrofolate.

The protein belongs to the TRAFAC class TrmE-Era-EngA-EngB-Septin-like GTPase superfamily. TrmE GTPase family. In terms of assembly, homodimer. Heterotetramer of two MnmE and two MnmG subunits. The cofactor is K(+).

It localises to the cytoplasm. Exhibits a very high intrinsic GTPase hydrolysis rate. Involved in the addition of a carboxymethylaminomethyl (cmnm) group at the wobble position (U34) of certain tRNAs, forming tRNA-cmnm(5)s(2)U34. This chain is tRNA modification GTPase MnmE, found in Polynucleobacter asymbioticus (strain DSM 18221 / CIP 109841 / QLW-P1DMWA-1) (Polynucleobacter necessarius subsp. asymbioticus).